Reading from the N-terminus, the 290-residue chain is Probable aquaporin PIP2-1 (290 aa).

Transmembrane regions (helical) follow at residues 43–63 (AVIA…ATVI) and 80–100 (CGGV…FILV). Positions 112–114 (NPA) match the NPA 1 motif. 3 helical membrane-spanning segments follow: residues 131-151 (ILYI…VKAF), 173-193 (GTGL…VFSA), and 207-227 (VLAP…TIPI). An NPA 2 motif is present at residues 233-235 (NPA). A helical membrane pass occupies residues 255–275 (IFWVGPFVGAAIAAFYHQYIL).

This sequence belongs to the MIP/aquaporin (TC 1.A.8) family. PIP (TC 1.A.8.11) subfamily. Expressed in roots, leaves and anthers.

It is found in the cell membrane. In terms of biological role, aquaporins facilitate the transport of water and small neutral solutes across cell membranes. In Oryza sativa subsp. japonica (Rice), this protein is Probable aquaporin PIP2-1 (PIP2-1).